Consider the following 410-residue polypeptide: Cysteine desulfurase IscS (410 aa).

Pyridoxal 5'-phosphate contacts are provided by residues 80 to 81 (AT), Asn160, Gln188, and 208 to 210 (SGH). Lys211 bears the N6-(pyridoxal phosphate)lysine mark. Thr248 contributes to the pyridoxal 5'-phosphate binding site. Cys334 functions as the Cysteine persulfide intermediate in the catalytic mechanism. Cys334 is a [2Fe-2S] cluster binding site.

It belongs to the class-V pyridoxal-phosphate-dependent aminotransferase family. NifS/IscS subfamily. Homodimer. Forms a heterotetramer with IscU, interacts with other sulfur acceptors. Requires pyridoxal 5'-phosphate as cofactor.

It localises to the cytoplasm. The catalysed reaction is (sulfur carrier)-H + L-cysteine = (sulfur carrier)-SH + L-alanine. It participates in cofactor biosynthesis; iron-sulfur cluster biosynthesis. In terms of biological role, master enzyme that delivers sulfur to a number of partners involved in Fe-S cluster assembly, tRNA modification or cofactor biosynthesis. Catalyzes the removal of elemental sulfur atoms from cysteine to produce alanine. Functions as a sulfur delivery protein for Fe-S cluster synthesis onto IscU, an Fe-S scaffold assembly protein, as well as other S acceptor proteins. This chain is Cysteine desulfurase IscS, found in Rickettsia felis (strain ATCC VR-1525 / URRWXCal2) (Rickettsia azadi).